We begin with the raw amino-acid sequence, 153 residues long: Ribosome maturation factor RimP (153 aa).

This sequence belongs to the RimP family.

It is found in the cytoplasm. Its function is as follows. Required for maturation of 30S ribosomal subunits. The polypeptide is Ribosome maturation factor RimP (Chromohalobacter salexigens (strain ATCC BAA-138 / DSM 3043 / CIP 106854 / NCIMB 13768 / 1H11)).